The following is a 329-amino-acid chain: Beta-ketoacyl-[acyl-carrier-protein] synthase III (329 aa).

Catalysis depends on residues C123 and H256. Positions Q257 to R261 are ACP-binding. Residue N286 is part of the active site.

It belongs to the thiolase-like superfamily. FabH family. Homodimer.

It is found in the cytoplasm. The enzyme catalyses malonyl-[ACP] + acetyl-CoA + H(+) = 3-oxobutanoyl-[ACP] + CO2 + CoA. It functions in the pathway lipid metabolism; fatty acid biosynthesis. In terms of biological role, catalyzes the condensation reaction of fatty acid synthesis by the addition to an acyl acceptor of two carbons from malonyl-ACP. Catalyzes the first condensation reaction which initiates fatty acid synthesis and may therefore play a role in governing the total rate of fatty acid production. Possesses both acetoacetyl-ACP synthase and acetyl transacylase activities. Its substrate specificity determines the biosynthesis of branched-chain and/or straight-chain of fatty acids. This Burkholderia pseudomallei (strain 1710b) protein is Beta-ketoacyl-[acyl-carrier-protein] synthase III.